Consider the following 278-residue polypeptide: Urease accessory protein UreD (278 aa).

This sequence belongs to the UreD family. As to quaternary structure, ureD, UreF and UreG form a complex that acts as a GTP-hydrolysis-dependent molecular chaperone, activating the urease apoprotein by helping to assemble the nickel containing metallocenter of UreC. The UreE protein probably delivers the nickel.

Its subcellular location is the cytoplasm. In terms of biological role, required for maturation of urease via the functional incorporation of the urease nickel metallocenter. This is Urease accessory protein UreD from Deinococcus radiodurans (strain ATCC 13939 / DSM 20539 / JCM 16871 / CCUG 27074 / LMG 4051 / NBRC 15346 / NCIMB 9279 / VKM B-1422 / R1).